The following is a 1376-amino-acid chain: Ubiquitin carboxyl-terminal hydrolase 47 (1376 aa).

Residue lysine 122 is modified to N6-acetyllysine. A USP domain is found at 188-564 (VGLVNQAMTC…NAYMLIYRLK (377 aa)). Cysteine 197 functions as the Nucleophile in the catalytic mechanism. Positions 426 to 452 (EKSPQTESCTDSGAENEGSCHSDQMSN) are disordered. Positions 430–452 (QTESCTDSGAENEGSCHSDQMSN) are enriched in polar residues. The active-site Proton acceptor is histidine 503. Phosphoserine is present on serine 832. Disordered regions lie at residues 835 to 863 (SYSK…KGPA), 880 to 971 (LKSL…SSDT), and 985 to 1025 (GLDS…ESGK). Positions 882-900 (SLSLQQQQQDGDNGDSSKS) are enriched in low complexity. Phosphoserine occurs at positions 911 and 934. Positions 930 to 939 (HIQTSDPENF) are enriched in polar residues. Over residues 941 to 951 (SEERSDSDVNN) the composition is skewed to basic and acidic residues. Positions 954-970 (STSSVDSDILSSSHSSD) are enriched in low complexity. The span at 998–1007 (KANEGKKETW) shows a compositional bias: basic and acidic residues. Residues 1008-1021 (DTAEEDSGTDSEYD) are compositionally biased toward acidic residues. Serine 1014 carries the post-translational modification Phosphoserine. A Phosphothreonine modification is found at threonine 1016. Serine 1018 is subject to Phosphoserine.

The protein belongs to the peptidase C19 family. USP47 subfamily. As to quaternary structure, interacts with BTRC and FBXW11. Interacts with POLB.

The protein resides in the cytoplasm. It catalyses the reaction Thiol-dependent hydrolysis of ester, thioester, amide, peptide and isopeptide bonds formed by the C-terminal Gly of ubiquitin (a 76-residue protein attached to proteins as an intracellular targeting signal).. In terms of biological role, ubiquitin-specific protease that specifically deubiquitinates monoubiquitinated DNA polymerase beta (POLB), stabilizing POLB thereby playing a role in base-excision repair (BER). Acts as a regulator of cell growth and genome integrity. May also indirectly regulate CDC25A expression at a transcriptional level. This chain is Ubiquitin carboxyl-terminal hydrolase 47 (Usp47), found in Mus musculus (Mouse).